The sequence spans 189 residues: Flavin prenyltransferase UbiX (189 aa).

FMN contacts are provided by residues 10–12 (GAS), Ser37, 88–91 (SIKT), and Arg123. Residues Tyr153 and Arg169 each contribute to the dimethylallyl phosphate site.

The protein belongs to the UbiX/PAD1 family.

It catalyses the reaction dimethylallyl phosphate + FMNH2 = prenylated FMNH2 + phosphate. It functions in the pathway cofactor biosynthesis; ubiquinone biosynthesis. Its function is as follows. Flavin prenyltransferase that catalyzes the synthesis of the prenylated FMN cofactor (prenyl-FMN) for 4-hydroxy-3-polyprenylbenzoic acid decarboxylase UbiD. The prenyltransferase is metal-independent and links a dimethylallyl moiety from dimethylallyl monophosphate (DMAP) to the flavin N5 and C6 atoms of FMN. This chain is Flavin prenyltransferase UbiX, found in Escherichia coli O157:H7.